We begin with the raw amino-acid sequence, 188 residues long: dCTP deaminase (188 aa).

DCTP contacts are provided by residues 111–116, 135–137, Gln156, Tyr170, Lys179, and Gln180; these read KSTYAR and TLE. Glu137 acts as the Proton donor/acceptor in catalysis.

The protein belongs to the dCTP deaminase family. Homotrimer.

The enzyme catalyses dCTP + H2O + H(+) = dUTP + NH4(+). It participates in pyrimidine metabolism; dUMP biosynthesis; dUMP from dCTP (dUTP route): step 1/2. In terms of biological role, catalyzes the deamination of dCTP to dUTP. The sequence is that of dCTP deaminase from Rickettsia africae (strain ESF-5).